Here is a 595-residue protein sequence, read N- to C-terminus: Zinc finger protein 467 (595 aa).

The disordered stretch occupies residues 1 to 67; the sequence is MRETLEALSS…EEGAHTEQAE (67 aa). Residue K97 forms a Glycyl lysine isopeptide (Lys-Gly) (interchain with G-Cter in SUMO2) linkage. C2H2-type zinc fingers lie at residues 160 to 182, 188 to 210, 216 to 238, 244 to 266, 272 to 294, and 300 to 322; these read YGCG…QRLH, CACP…QRSH, FPCS…LRTH, YPCA…QKTH, FPCT…QRIH, and YQCA…QRVH. The interval 313–350 is disordered; it reads QHLVRHQRVHQTAGPARPSPDSSASPHSTAPSPTPSFP. A compositionally biased stretch (low complexity) spans 325-343; it reads AGPARPSPDSSASPHSTAP. C2H2-type zinc fingers lie at residues 355–377, 431–453, 459–481, 487–509, 515–537, and 543–565; these read FACS…QCLH, FFCP…PRVH, FACT…SRAH, FACA…QAVH, HACA…QAIH, and FSCP…QLIH. A Glycyl lysine isopeptide (Lys-Gly) (interchain with G-Cter in SUMO2) cross-link involves residue K368.

It belongs to the krueppel C2H2-type zinc-finger protein family. As to quaternary structure, interacts with STAT3. Enhances STAT3 activity by keeping it in the nucleus.

It is found in the nucleus. Functionally, transcription factor that promotes adipocyte differentiation and suppresses osteoblast differentiation in the bone marrow. Enhances the osteoclast-supporting ability of stromal cells. Binds with STAT3 the consensus sequence 5'-CTTCTGGGAAGA-3' of the acute phase response element (APRE). Transactivates several promoters including FOS, OSM and PPARG. Recruits a histone deacetylase complex. The polypeptide is Zinc finger protein 467 (ZNF467) (Homo sapiens (Human)).